The following is a 121-amino-acid chain: UPF0102 protein DehaBAV1_0707 (121 aa).

It belongs to the UPF0102 family.

This chain is UPF0102 protein DehaBAV1_0707, found in Dehalococcoides mccartyi (strain ATCC BAA-2100 / JCM 16839 / KCTC 5957 / BAV1).